The sequence spans 124 residues: Flagellar transcriptional regulator FlhD (124 aa).

It belongs to the FlhD family. Homodimer; disulfide-linked. Forms a heterohexamer composed of two FlhC and four FlhD subunits. Each FlhC binds a FlhD dimer, forming a heterotrimer, and a hexamer assembles by dimerization of two heterotrimers.

Its subcellular location is the cytoplasm. In terms of biological role, functions in complex with FlhC as a master transcriptional regulator that regulates transcription of several flagellar and non-flagellar operons by binding to their promoter region. Activates expression of class 2 flagellar genes, including fliA, which is a flagellum-specific sigma factor that turns on the class 3 genes. Also regulates genes whose products function in a variety of physiological pathways. This is Flagellar transcriptional regulator FlhD from Pectobacterium carotovorum (Erwinia carotovora).